Consider the following 352-residue polypeptide: Putative histone-lysine N-methyltransferase ASHH4 (352 aa).

Positions 60-109 (DHGIFCSCSLDPGSSTLCGSDCNCGILLSSCSSSCKCSSECTNKPFQQRH) constitute an AWS domain. Residues 111 to 228 (KKMKLVQTEK…KGEQLTYDYQ (118 aa)) form the SET domain. The Post-SET domain maps to 234 to 250 (ADQDCYCGAVCCRKKLG).

This sequence belongs to the class V-like SAM-binding methyltransferase superfamily. Histone-lysine methyltransferase family. SET2 subfamily.

It is found in the nucleus. The protein localises to the chromosome. The protein resides in the centromere. It carries out the reaction L-lysyl-[histone] + S-adenosyl-L-methionine = N(6)-methyl-L-lysyl-[histone] + S-adenosyl-L-homocysteine + H(+). Functionally, histone methyltransferase. The sequence is that of Putative histone-lysine N-methyltransferase ASHH4 (ASHH4) from Arabidopsis thaliana (Mouse-ear cress).